A 316-amino-acid chain; its full sequence is Epoxide hydrolase 2 (316 aa).

One can recognise an AB hydrolase-1 domain in the interval 25 to 302 (PAVLFLHGFP…AAHFINQERP (278 aa)). The active-site Nucleophile is the D101. Residue Y150 participates in an epoxide binding. The active-site Proton donor is Y230. H295 serves as the catalytic Proton acceptor.

The protein belongs to the AB hydrolase superfamily. Epoxide hydrolase family. In terms of assembly, homodimer. Highly expressed in young fruits 15 days after anthesis (15-DAA). Also observed in stems and leaves.

It carries out the reaction an epoxide + H2O = an ethanediol. The enzyme catalyses (24S)-24,25-epoxycucurbitadienol + H2O = (24R)-24,25-dihydroxycucurbitadienol. It participates in secondary metabolite biosynthesis; terpenoid biosynthesis. Its function is as follows. Epoxide hydrolase involved in the biosynthesis of cucurbitacin and mogroside tetracyclic triterpene natural products (e.g. siamenoside I and mogrosides IV, V and VI). Cucurbitacins have cytotoxic properties and exhibit deterrent taste as a defense barrier against herbivores. Mogrosides are nonsugar highly oxygenated compounds used as high-intensity zero-calorie sweeteners; they also possess pharmacological properties such as regulating immunity, lowering blood sugar and lipid levels, protecting the liver, and acting as antioxidants and antitumor agents. Catalyzes the hydrolysis of aromatic epoxide-containing substrates, such as the conversion of 24,25-epoxycucurbitadienol to 24,25-dihydroxycucurbitadienol. This Siraitia grosvenorii (Monk's fruit) protein is Epoxide hydrolase 2.